The primary structure comprises 182 residues: Ribulose bisphosphate carboxylase small subunit, chloroplastic 4 (182 aa).

Residues 1–41 (MAATMMNKTVVLSKGCTKPSAVPKVSINRKGFLNTAMNKKR) constitute a chloroplast transit peptide.

Belongs to the RuBisCO small chain family. Heterohexadecamer of 8 large and 8 small subunits.

It localises to the plastid. Its subcellular location is the chloroplast. Its function is as follows. RuBisCO catalyzes two reactions: the carboxylation of D-ribulose 1,5-bisphosphate, the primary event in carbon dioxide fixation, as well as the oxidative fragmentation of the pentose substrate. Both reactions occur simultaneously and in competition at the same active site. Although the small subunit is not catalytic it is essential for maximal activity. The polypeptide is Ribulose bisphosphate carboxylase small subunit, chloroplastic 4 (Acetabularia peniculus (Green alga)).